Consider the following 566-residue polypeptide: Serine/threonine-protein kinase haspin homolog (566 aa).

A Protein kinase domain is found at 248-566 (LLNTKKIGEG…HCANYLFNLN (319 aa)). ATP is bound by residues 254-262 (IGEGAYGEV), Lys-282, 377-382 (KFAGSD), 418-423 (DLHLGN), and 456-458 (DYT). Asp-418 functions as the Proton acceptor in the catalytic mechanism.

Belongs to the protein kinase superfamily. Ser/Thr protein kinase family. Haspin subfamily. In terms of assembly, interacts with pds5 and vtd. Mg(2+) is required as a cofactor.

Its subcellular location is the nucleus lamina. It localises to the chromosome. It is found in the cytoplasm. The protein resides in the cytoskeleton. The protein localises to the spindle. It carries out the reaction L-seryl-[protein] + ATP = O-phospho-L-seryl-[protein] + ADP + H(+). The enzyme catalyses L-threonyl-[protein] + ATP = O-phospho-L-threonyl-[protein] + ADP + H(+). In terms of biological role, serine/threonine-protein kinase that phosphorylates histone H3 at 'Thr-4' (H3T3ph) during mitosis and interphase. Function is essential for chromosome organization during mitosis and genome organization in interphase cells, thus playing a functional role in gene regulation. During mitosis, may act through H3T3ph to both position and modulate activation of AURKB and other components of the chromosomal passenger complex (CPC) at centromeres to ensure proper chromatid cohesion, metaphase alignment and normal progression through the cell cycle. During interphase, associates with the cohesion complex and mediates pds5 binding to chromatin to ensure correct sister chromatid cohesion, chromatin organization, and also functions with Pds5-cohesin to modify Polycomb-dependent homeotic transformations. Function during interphase is required for insulator activity, nuclear compaction, heterochromatin-induced position-effect variegation and PcG-mediated pairing-sensitive silencing. This Drosophila melanogaster (Fruit fly) protein is Serine/threonine-protein kinase haspin homolog.